The sequence spans 100 residues: Urease subunit gamma (100 aa).

The protein belongs to the urease gamma subunit family. Heterotrimer of UreA (gamma), UreB (beta) and UreC (alpha) subunits. Three heterotrimers associate to form the active enzyme.

Its subcellular location is the cytoplasm. The enzyme catalyses urea + 2 H2O + H(+) = hydrogencarbonate + 2 NH4(+). Its pathway is nitrogen metabolism; urea degradation; CO(2) and NH(3) from urea (urease route): step 1/1. This is Urease subunit gamma from Burkholderia cenocepacia (strain ATCC BAA-245 / DSM 16553 / LMG 16656 / NCTC 13227 / J2315 / CF5610) (Burkholderia cepacia (strain J2315)).